Consider the following 197-residue polypeptide: Pyridoxal 5'-phosphate synthase subunit PdxT (197 aa).

An L-glutamine-binding site is contributed by 53–55 (GES). Cys85 acts as the Nucleophile in catalysis. L-glutamine-binding positions include Arg114 and 142-143 (IR). Active-site charge relay system residues include His179 and Glu181.

The protein belongs to the glutaminase PdxT/SNO family. In terms of assembly, in the presence of PdxS, forms a dodecamer of heterodimers. Only shows activity in the heterodimer.

It carries out the reaction aldehydo-D-ribose 5-phosphate + D-glyceraldehyde 3-phosphate + L-glutamine = pyridoxal 5'-phosphate + L-glutamate + phosphate + 3 H2O + H(+). It catalyses the reaction L-glutamine + H2O = L-glutamate + NH4(+). It participates in cofactor biosynthesis; pyridoxal 5'-phosphate biosynthesis. Catalyzes the hydrolysis of glutamine to glutamate and ammonia as part of the biosynthesis of pyridoxal 5'-phosphate. The resulting ammonia molecule is channeled to the active site of PdxS. This is Pyridoxal 5'-phosphate synthase subunit PdxT from Thermococcus gammatolerans (strain DSM 15229 / JCM 11827 / EJ3).